The primary structure comprises 54 residues: Large ribosomal subunit protein bL33 (54 aa).

This sequence belongs to the bacterial ribosomal protein bL33 family.

This chain is Large ribosomal subunit protein bL33, found in Chloroflexus aggregans (strain MD-66 / DSM 9485).